A 274-amino-acid chain; its full sequence is Dermonecrotic toxin SdSicTox-betaIIB1bv (274 aa).

Residue histidine 5 is part of the active site. 2 residues coordinate Mg(2+): glutamate 25 and aspartate 27. Histidine 41 serves as the catalytic Nucleophile. 2 disulfides stabilise this stretch: cysteine 45–cysteine 51 and cysteine 47–cysteine 190. Residue aspartate 85 participates in Mg(2+) binding.

Belongs to the arthropod phospholipase D family. Class II subfamily. Mg(2+) is required as a cofactor. In terms of tissue distribution, expressed by the venom gland.

It localises to the secreted. The enzyme catalyses an N-(acyl)-sphingosylphosphocholine = an N-(acyl)-sphingosyl-1,3-cyclic phosphate + choline. It catalyses the reaction an N-(acyl)-sphingosylphosphoethanolamine = an N-(acyl)-sphingosyl-1,3-cyclic phosphate + ethanolamine. It carries out the reaction a 1-acyl-sn-glycero-3-phosphocholine = a 1-acyl-sn-glycero-2,3-cyclic phosphate + choline. The catalysed reaction is a 1-acyl-sn-glycero-3-phosphoethanolamine = a 1-acyl-sn-glycero-2,3-cyclic phosphate + ethanolamine. In terms of biological role, dermonecrotic toxins cleave the phosphodiester linkage between the phosphate and headgroup of certain phospholipids (sphingolipid and lysolipid substrates), forming an alcohol (often choline) and a cyclic phosphate. This toxin acts on sphingomyelin (SM). It may also act on ceramide phosphoethanolamine (CPE), lysophosphatidylcholine (LPC) and lysophosphatidylethanolamine (LPE), but not on lysophosphatidylserine (LPS), and lysophosphatidylglycerol (LPG). It acts by transphosphatidylation, releasing exclusively cyclic phosphate products as second products. Induces dermonecrosis, hemolysis, increased vascular permeability, edema, inflammatory response, and platelet aggregation. This Sicarius cf. damarensis (strain GJB-2008) (Six-eyed sand spider) protein is Dermonecrotic toxin SdSicTox-betaIIB1bv.